The following is a 503-amino-acid chain: MNISVTATPVKKIKTELLVVPFTTGALKKNADGILQDLGYDAVVLRDFKADAGELVILYGAAGKAIAARAALLGMGEGKKVTDFRKAAAALALKAMDMKIESVAVDFSGVKGFASSAKSSVASICSAFIEGCYTGSYRFDRLKSDKLKKKKDESDKTKEISELVLRAEPAQLSAVEDGLAAGIITGSCQNMARDLVNLPGNLLQAEDISAAAVESGKRCGFEVNVFGKEEIEALGMGGLLAVNRGSQHPPTFTVLDYKPEGKVAKTVALVGKGVTFDSGGISLKPSEGMGEMKSDMSGAASVIGAVEAVARLGLPIRVIGLIPATDNMPSGSATKPGDVITTYSGITVEVGNTDAEGRLILADALTYAKKQYNPDVIIDLATLTGACIVALGYTVAGLFSNDDRLADDIFEAGQITGEKVWRMPLWEEYDEMIKSDVADVSNLGARGAGSVTASRFLEKFIDGHKKWAHIDIAGPSFSAKGAKVSGATGFGVRLLVELLKKWS.

Positions 272 and 277 each coordinate Mn(2+). Lysine 284 is a catalytic residue. Positions 295, 354, and 356 each coordinate Mn(2+). Residue arginine 358 is part of the active site.

This sequence belongs to the peptidase M17 family. Requires Mn(2+) as cofactor.

The protein localises to the cytoplasm. It carries out the reaction Release of an N-terminal amino acid, Xaa-|-Yaa-, in which Xaa is preferably Leu, but may be other amino acids including Pro although not Arg or Lys, and Yaa may be Pro. Amino acid amides and methyl esters are also readily hydrolyzed, but rates on arylamides are exceedingly low.. The catalysed reaction is Release of an N-terminal amino acid, preferentially leucine, but not glutamic or aspartic acids.. Presumably involved in the processing and regular turnover of intracellular proteins. Catalyzes the removal of unsubstituted N-terminal amino acids from various peptides. The sequence is that of Probable cytosol aminopeptidase from Chlorobium limicola (strain DSM 245 / NBRC 103803 / 6330).